The chain runs to 89 residues: Small ribosomal subunit protein uS14A (89 aa).

Belongs to the universal ribosomal protein uS14 family. In terms of assembly, part of the 30S ribosomal subunit. Contacts proteins S3 and S10.

In terms of biological role, binds 16S rRNA, required for the assembly of 30S particles and may also be responsible for determining the conformation of the 16S rRNA at the A site. This is Small ribosomal subunit protein uS14A from Oceanobacillus iheyensis (strain DSM 14371 / CIP 107618 / JCM 11309 / KCTC 3954 / HTE831).